Consider the following 558-residue polypeptide: Protein S10 (558 aa).

Positions 539–558 (SSNTSSHEHTQKIVLNKVTR) are disordered.

The protein is Protein S10 (S10) of Avena sativa (Oat).